A 63-amino-acid chain; its full sequence is Small ribosomal subunit protein eS17 (63 aa).

It belongs to the eukaryotic ribosomal protein eS17 family.

The chain is Small ribosomal subunit protein eS17 from Methanococcus maripaludis (strain DSM 14266 / JCM 13030 / NBRC 101832 / S2 / LL).